Reading from the N-terminus, the 136-residue chain is Histone H3.3 (136 aa).

The disordered stretch occupies residues 1-43 (MARTKQTARKSTGGKAPRKQLATKAARKSAPSTGGVKKPHRYR). An N6,N6,N6-trimethyllysine; alternate modification is found at lysine 5. Position 5 is an N6,N6-dimethyllysine; alternate (lysine 5). 2 positions are modified to N6-methyllysine; alternate: lysine 5 and lysine 10. An N6-acetyllysine; alternate modification is found at lysine 10. Serine 11 is subject to Phosphoserine. Lysine 15 carries the post-translational modification N6,N6-dimethyllysine; alternate. 5 positions are modified to N6-acetyllysine; alternate: lysine 15, lysine 19, lysine 24, lysine 28, and lysine 37. Residues lysine 19, lysine 24, lysine 28, and lysine 37 each carry the N6-methyllysine; alternate modification. Residues lysine 28 and lysine 37 each carry the N6,N6,N6-trimethyllysine; alternate modification. An N6,N6-dimethyllysine; alternate mark is found at lysine 28 and lysine 37. N6-acetyllysine occurs at positions 57 and 65. Lysine 80 carries the post-translational modification N6,N6,N6-trimethyllysine; alternate. Residue lysine 80 is modified to N6,N6-dimethyllysine; alternate. Position 80 is an N6-methyllysine; alternate (lysine 80).

It belongs to the histone H3 family. In terms of assembly, the nucleosome is a histone octamer containing two molecules each of H2A, H2B, H3 and H4 assembled in one H3-H4 heterotetramer and two H2A-H2B heterodimers. The octamer wraps approximately 147 bp of DNA. Post-translationally, phosphorylated at Ser-11. This is required for transcriptional activation through TBP recruitment to the promoters. Phosphorylation at Ser-11 also promotes subsequent acetylation at Lys-15. Mono-, di- and trimethylation of Lys-5 by the COMPASS complex activates gene expression by regulating transcription elongation and plays a role in telomere length maintenance. Lys-5 methylation enrichment correlates with transcription levels, and occurs in a 5' to 3' gradient with tri-methyl enrichment at the 5'-end of genes, shifting to di-methyl and then mono-methyl. The COMPASS mediated di and trimethylation of Lys-5 requires histone H2B monoubiquitination. Methylation of Lys-37 by SET2 represses gene expression. Methylation of Lys-80 by DOT1 is required for association of SIR proteins with telomeric regions and for telomeric silencing. In terms of processing, acetylation of histone H3 leads to transcriptional activation. Acetylation at Lys-15 is promoted by the phosphorylation at Ser-11. Acetylation at Lys-57 occurs predominantly in newly synthesized H3 molecule during G1, S and G2/M of the cell cycle and may be involved in DNA repair.

The protein resides in the nucleus. Its subcellular location is the chromosome. Functionally, core component of nucleosome. Nucleosomes wrap and compact DNA into chromatin, limiting DNA accessibility to the cellular machineries which require DNA as a template. Histones thereby play a central role in transcription regulation, DNA repair, DNA replication and chromosomal stability. DNA accessibility is regulated via a complex set of post-translational modifications of histones, also called histone code, and nucleosome remodeling. The chain is Histone H3.3 (HHT3) from Trichinella pseudospiralis (Parasitic roundworm).